The primary structure comprises 48 residues: Large ribosomal subunit protein bL33A (48 aa).

It belongs to the bacterial ribosomal protein bL33 family.

The sequence is that of Large ribosomal subunit protein bL33A from Streptococcus pyogenes serotype M28 (strain MGAS6180).